Reading from the N-terminus, the 303-residue chain is Recombination-associated protein RdgC (303 aa).

The protein belongs to the RdgC family.

It localises to the cytoplasm. It is found in the nucleoid. Its function is as follows. May be involved in recombination. This Shewanella halifaxensis (strain HAW-EB4) protein is Recombination-associated protein RdgC.